The following is a 281-amino-acid chain: F-actin-capping protein subunit alpha (281 aa).

Belongs to the F-actin-capping protein alpha subunit family. In terms of assembly, component of the F-actin capping complex, composed of a heterodimer of an alpha and a beta subunit.

It is found in the cytoplasm. The protein resides in the cytoskeleton. Functionally, F-actin-capping proteins bind in a Ca(2+)-independent manner to the fast growing ends of actin filaments (barbed end) thereby blocking the exchange of subunits at these ends. Unlike other capping proteins (such as gelsolin and severin), these proteins do not sever actin filaments. In Dictyostelium discoideum (Social amoeba), this protein is F-actin-capping protein subunit alpha (acpB).